The primary structure comprises 836 residues: Glutamate receptor ionotropic, kainate glr-3 (836 aa).

A signal peptide spans 1 to 19 (MFWIAKTLIAFLILLKTDC). At 20-523 (YKIAIPANLI…WFKFMDPLST (504 aa)) the chain is on the extracellular side. Residues Cys76 and Cys320 are joined by a disulfide bond. Asn225, Asn257, Asn356, Asn391, and Asn419 each carry an N-linked (GlcNAc...) asparagine glycan. L-glutamate contacts are provided by residues 478-480 (SLT) and Arg485. The chain crosses the membrane as a helical span at residues 524 to 544 (QVWIMTFASYFVVSVAIWIIA). The Cytoplasmic segment spans residues 545 to 600 (KISPYEQFERDEDNGQYKPVDNQFSLRNSFWFTVCSLMQQGSELCPRAASTRLLTG). The helical transmembrane segment at 601–621 (IWWFFALILISSYTANLAAVL) threads the bilayer. The Extracellular portion of the chain corresponds to 622–780 (TTRRMETPIE…KRKDQDDGES (159 aa)). 651 to 652 (ST) serves as a coordination point for L-glutamate. A glycan (N-linked (GlcNAc...) asparagine) is linked at Asn657. Glu699 is an L-glutamate binding site. Residues 781-801 (IGGIFIILVVGLVLTAVLVIF) form a helical membrane-spanning segment. Topologically, residues 802 to 836 (ELITTRKPSPAQSQVIRHVNVIPSFKLGFFRWNVN) are cytoplasmic.

The protein belongs to the glutamate-gated ion channel (TC 1.A.10.1) family. As to expression, expressed in the intestine and in the ASER neuron. Also expressed in the thermosensitive RIA interneuron.

The protein resides in the cell membrane. Its subcellular location is the postsynaptic cell membrane. Activated by low temperature of 18 degrees Celsius in ASER neuron. Its function is as follows. Ionotropic glutamate receptor. Activation by glutamate requires additional verification. L-glutamate acts as an excitatory neurotransmitter at many synapses in the central nervous system. Binding of the excitatory neurotransmitter L-glutamate induces a conformation change, leading to the opening of the cation channel, and thereby converts the chemical signal to an electrical impulse. The receptor then desensitizes rapidly and enters a transient inactive state, characterized by the presence of bound agonist. Independent of its ionotropic glutamate receptor activity, acts as a thermoreceptor in the ASER neuron where it triggers a calcium response to activate cold avoidance behavior in response to temperatures below 19 degrees Celsius. Possibly functions as a metabotropic cold receptor and acts upstream of the G(o) G protein goa-1 in the ASER neuron. Also functions in cold sensing in the intestine. The protein is Glutamate receptor ionotropic, kainate glr-3 of Caenorhabditis elegans.